The chain runs to 293 residues: Biphenyl-2,3-diol 1,2-dioxygenase (293 aa).

2 consecutive VOC domains span residues 5 to 119 and 143 to 265; these read RLGY…IYYG and GIGH…FGWG. Residues His146, His210, and Glu261 each contribute to the Fe cation site.

This sequence belongs to the extradiol ring-cleavage dioxygenase family. Homooctamer. The cofactor is Fe(2+).

It catalyses the reaction biphenyl-2,3-diol + O2 = 2-hydroxy-6-oxo-6-phenylhexa-2,4-dienoate + H(+). The protein operates within xenobiotic degradation; biphenyl degradation; 2-hydroxy-2,4-pentadienoate and benzoate from biphenyl: step 3/4. In Pseudomonas sp. (strain KKS102), this protein is Biphenyl-2,3-diol 1,2-dioxygenase (bphC).